The sequence spans 604 residues: MCGILAVLGAADWSQAKRAHVLSCSRRLKHRGPDWSGLYQCEGNFLAQQRLAIVSPLSGDQPLYNADRTIVVVANGEIYNHKKIRKQFASKHTFSTGSDCEVIIPLYEEYGEDFVDMLDGVFAFVLYDTRTKTYMAARDAIGVNPLYIGRGSDGAVWISSEMKALNEDCVEFEIFPPGHLYSSAAGGLRRWYKPQWFAENVPATPYQPLLLREAFEKAVIKRLMTDVPFGVLLSGGLDSSLVAAVTKRHLIKTEAAEKFGAELHSFVVGLEGSPDLIAAREVADHLGTIHHEFHFTVQDGIDAIEEVIYHDETYDVTTIRASTPMFLMARKIKALGVKMVLSGEGSDELLGGYLYFHFAPNKEEFHKETCRKVKALHQYDCLRANKATSAWGLEVRVPFLDKEFINVAMSMDPEWKMYNADLGRIEKWVMRKAFDDEEHPYLPKHILYRQKEQFSDGVGYNWIDGLKAFTEQQVSDEMMKNAAKVYPHNTPVNKEAYYYRMIFERLFPQESARETVPWGPSIACSTPAAIEWVEQWKASHDPSGRLIASHNSASASANHTNHANANANGNSNGKANGNCAMAANGTNGVGLVVANGTANGKMEA.

Catalysis depends on Cys-2, which acts as the Nucleophile. Positions 2–186 (CGILAVLGAA…PGHLYSSAAG (185 aa)) constitute a Glutamine amidotransferase type-2 domain. Residues 50–54 (RLAIV), 75–77 (NGE), and Asp-99 each bind L-glutamine. Positions 211-451 (LREAFEKAVI…LPKHILYRQK (241 aa)) constitute an Asparagine synthetase domain. Residues Leu-232, Val-268, and 342 to 343 (SG) contribute to the ATP site.

It catalyses the reaction L-aspartate + L-glutamine + ATP + H2O = L-asparagine + L-glutamate + AMP + diphosphate + H(+). The protein operates within amino-acid biosynthesis; L-asparagine biosynthesis. In terms of biological role, essential for nitrogen assimilation, distribution and remobilization within the plant via the phloem. This is Asparagine synthetase [glutamine-hydrolyzing] 1 from Oryza sativa subsp. japonica (Rice).